We begin with the raw amino-acid sequence, 776 residues long: Disintegrin and metalloproteinase domain-containing protein 7 (776 aa).

An N-terminal signal peptide occupies residues 1 to 23; it reads MLPGCIFLMILLILQVKEKVILG. A propeptide spanning residues 24-176 is cleaved from the precursor; that stretch reads VEGQQLVYPK…NYSCTELNFT (153 aa). The Extracellular portion of the chain corresponds to 26-669; the sequence is GQQLVYPKKL…WEETLNVTNV (644 aa). Asn-84, Asn-167, and Asn-174 each carry an N-linked (GlcNAc...) asparagine glycan. The Peptidase M12B domain maps to 199 to 394; the sequence is KYIELFIVAD…YKPTCMLNIP (196 aa). Disulfide bonds link Cys-310/Cys-389, Cys-350/Cys-373, Cys-352/Cys-357, and Cys-460/Cys-480. Positions 402–488 constitute a Disintegrin domain; it reads FQFCGNKKLD…ACPKDQFRVN (87 aa). 3 N-linked (GlcNAc...) asparagine glycosylation sites follow: Asn-584, Asn-629, and Asn-665. A helical membrane pass occupies residues 670 to 690; that stretch reads AILIVVLVLVIVGIGVLILLI. Over 691–776 the chain is Cytoplasmic; it reads RYQKCIKLKQ…GIADPNQSAK (86 aa). The interval 757 to 776 is disordered; the sequence is TLKPASKDSRGIADPNQSAK.

As to quaternary structure, interacts with ITM2B in sperm; the interaction increases following capacitation. Interacts with HSPA5 and CANX.

The protein resides in the membrane. Functionally, required for normal male fertility via maintenance of epithelial cell morphology in the caput epididymis and subsequently correct epididymis lumen structure required for sperm development. Plays a role in sperm motility, flagella morphology and tyrosine phosphorylation during sperm capacitance. Plays a role in normal expression levels of HSPA5, ITM2B and ADAM2 in sperm both prior to and post-capacitation. This is a non catalytic metalloprotease-like protein. The chain is Disintegrin and metalloproteinase domain-containing protein 7 (ADAM7) from Macaca fascicularis (Crab-eating macaque).